Reading from the N-terminus, the 378-residue chain is Mitogen-activated protein kinase mpkC (378 aa).

In terms of domain architecture, Protein kinase spans 20 to 300; it reads YVNPQPIGMG…AQDALRHPYL (281 aa). ATP-binding positions include 26 to 34 and Lys49; that span reads IGMGSFGLV. The active-site Proton acceptor is the Asp141.

The protein belongs to the protein kinase superfamily. Ser/Thr protein kinase family. MAP kinase subfamily. Requires Mg(2+) as cofactor.

The protein resides in the nucleus. It catalyses the reaction L-seryl-[protein] + ATP = O-phospho-L-seryl-[protein] + ADP + H(+). The enzyme catalyses L-threonyl-[protein] + ATP = O-phospho-L-threonyl-[protein] + ADP + H(+). Its activity is regulated as follows. Activated by threonine and tyrosine phosphorylation. Its function is as follows. Mitogen-activated protein kinase (MAPK), part of the high-osmolarity glycerol (HOG) pathway. With sakA, plays a role in the osmotic and oxidative stress responses. Involved in paradoxical growth, the cell wall integrity (CWI) pathway and biofilm formation. SakA and mpkC collaborate during virulence and mpkC could act by modulating sakA activity upon exposure to several types of stresses and during cell wall biosynthesis. In Aspergillus fumigatus (strain CBS 144.89 / FGSC A1163 / CEA10) (Neosartorya fumigata), this protein is Mitogen-activated protein kinase mpkC.